Consider the following 146-residue polypeptide: Hemoglobin subunit beta (146 aa).

One can recognise a Globin domain in the interval 2-146 (HWSAEEKQLI…VAHALARKYH (145 aa)). The heme b site is built by H63 and H92.

This sequence belongs to the globin family. Heterotetramer of two alpha chains and two beta chains. Red blood cells.

In terms of biological role, involved in oxygen transport from the lung to the various peripheral tissues. The polypeptide is Hemoglobin subunit beta (HBB) (Anseranas semipalmata (Magpie goose)).